The following is a 446-amino-acid chain: T-box transcription factor TBX19 (446 aa).

A DNA-binding region (T-box) is located at residues 43 to 216; sequence LEDAPLWQRF…YNPFAKAFLD (174 aa).

It localises to the nucleus. Functionally, transcriptional regulator involved in developmental processes. Can activate POMC gene expression and repress the alpha glycoprotein subunit and thyroid-stimulating hormone beta promoters. The polypeptide is T-box transcription factor TBX19 (Mus musculus (Mouse)).